The primary structure comprises 147 residues: Austinoid biosynthesis cluster protein H (147 aa).

The protein belongs to the trt14 isomerase family. In terms of assembly, homodimer.

Its pathway is secondary metabolite biosynthesis; terpenoid biosynthesis. Part of the gene cluster that mediates the biosynthesis of calidodehydroaustin, a fungal meroterpenoid. The first step of the pathway is the synthesis of 3,5-dimethylorsellinic acid by the polyketide synthase ausA. 3,5-dimethylorsellinic acid is then prenylated by the polyprenyl transferase ausN. Further epoxidation by the FAD-dependent monooxygenase ausM and cyclization by the probable terpene cyclase ausL lead to the formation of protoaustinoid A. Protoaustinoid A is then oxidized to spiro-lactone preaustinoid A3 by the combined action of the FAD-binding monooxygenases ausB and ausC, and the dioxygenase ausE. Acid-catalyzed keto-rearrangement and ring contraction of the tetraketide portion of preaustinoid A3 by ausJ lead to the formation of preaustinoid A4. The aldo-keto reductase ausK, with the help of ausH, is involved in the next step by transforming preaustinoid A4 into isoaustinone which is in turn hydroxylated by the P450 monooxygenase ausI to form austinolide. The cytochrome P450 monooxygenase ausG modifies austinolide to austinol. Austinol is further acetylated to austin by the O-acetyltransferase ausP, which spontaneously changes to dehydroaustin. The cytochrome P450 monooxygenase ausR then converts dehydroaustin is into 7-dehydrodehydroaustin. The hydroxylation catalyzed by ausR permits the O-acetyltransferase ausQ to add an additional acetyl group to the molecule, leading to the formation of acetoxydehydroaustin. The short chain dehydrogenase ausT catalyzes the reduction of the double bond present between carbon atoms 1 and 2 to convert 7-dehydrodehydroaustin into 1,2-dihydro-7-hydroxydehydroaustin. AusQ catalyzes not only an acetylation reaction but also the addition of the PKS ausV diketide product to 1,2-dihydro-7-hydroxydehydroaustin, forming precalidodehydroaustin. Finally, the iron/alpha-ketoglutarate-dependent dioxygenase converts precalidodehydroaustin into calidodehydroaustin. This Aspergillus calidoustus protein is Austinoid biosynthesis cluster protein H.